A 749-amino-acid chain; its full sequence is 5-methyltetrahydropteroyltriglutamate--homocysteine methyltransferase (749 aa).

5-methyltetrahydropteroyltri-L-glutamate-binding positions include 15 to 18 (RELK) and K114. Residues 425–427 (IGS) and E478 contribute to the L-homocysteine site. L-methionine is bound by residues 425–427 (IGS) and E478. A 5-methyltetrahydropteroyltri-L-glutamate-binding site is contributed by W555. D593 lines the L-homocysteine pocket. D593 serves as a coordination point for L-methionine. E599 contacts 5-methyltetrahydropteroyltri-L-glutamate. Zn(2+) is bound by residues H636, C638, and E660. H689 (proton donor) is an active-site residue. C721 is a Zn(2+) binding site.

Belongs to the vitamin-B12 independent methionine synthase family. It depends on Zn(2+) as a cofactor.

The enzyme catalyses 5-methyltetrahydropteroyltri-L-glutamate + L-homocysteine = tetrahydropteroyltri-L-glutamate + L-methionine. Its pathway is amino-acid biosynthesis; L-methionine biosynthesis via de novo pathway; L-methionine from L-homocysteine (MetE route): step 1/1. Functionally, catalyzes the transfer of a methyl group from 5-methyltetrahydrofolate to homocysteine resulting in methionine formation. The protein is 5-methyltetrahydropteroyltriglutamate--homocysteine methyltransferase of Streptococcus thermophilus (strain ATCC BAA-491 / LMD-9).